The sequence spans 499 residues: MNSNLLVLPILLPLLCALVLVFTKEKNRLSKILYIGTMSVNTVISLCLLIYVLQHKPITLDFGGWAAPYGIQFLGDSLSLVMVTVASFVVTLIMSYGFGRGEDRVNRYYLPTFILFLTTGVIGSFLTSDLFNLYVMFEIMLLASFVLVTLGQSVEQLRAAIIYVVLNIVGSWLFLLGIGLLYKTVGTLNFSQVALRLDQIHDNKAIIIISIVFIVAFGSKAALVLFMWLPKAYAVLNTELAALFAALMTKVGAYALIRFFTLLFDQHTGVTHPLLVFMSCITMLIGAFGVIAYRDIKKVASYQVILSIGFVILGLGSNTFAGVHGAIFYLANDIIVKTMLFFIIGSLVYMSGYREYKYLCGLAKKEPFFGVAFVVMIFAIGGVPPFSGFPGKVLIFQGAIENGNFIGLALMIITSLLAMYSLFRILFIMYFGDNDGEQVDFNPLPKHRKTILGILVAVVLAMGIAAPVVMNATENATKLNMDDNYFHSIVNSHLKEGNK.

The next 14 helical transmembrane spans lie at 3 to 23 (SNLLVLPILLPLLCALVLVFT), 32 to 52 (ILYIGTMSVNTVISLCLLIYV), 78 to 98 (LSLVMVTVASFVVTLIMSYGF), 108 to 128 (YYLPTFILFLTTGVIGSFLTS), 130 to 150 (LFNLYVMFEIMLLASFVLVTL), 161 to 181 (IIYVVLNIVGSWLFLLGIGLL), 206 to 226 (IIIISIVFIVAFGSKAALVLF), 240 to 260 (LAALFAALMTKVGAYALIRFF), 273 to 293 (PLLVFMSCITMLIGAFGVIAY), 308 to 328 (IGFVILGLGSNTFAGVHGAIF), 330 to 350 (LANDIIVKTMLFFIIGSLVYM), 368 to 388 (FFGVAFVVMIFAIGGVPPFSG), 403 to 423 (GNFIGLALMIITSLLAMYSLF), and 450 to 470 (TILGILVAVVLAMGIAAPVVM).

It belongs to the CPA3 antiporters (TC 2.A.63) subunit D family. May form a heterooligomeric complex that consists of seven subunits: mnhA2, mnhB2, mnhC2, mnhD2, mnhE2, mnhF2 and mnhG2.

The protein localises to the cell membrane. This is Putative antiporter subunit mnhD2 (mnhD2) from Staphylococcus haemolyticus (strain JCSC1435).